A 553-amino-acid polypeptide reads, in one-letter code: Probable inactive serine/threonine-protein kinase samkD (553 aa).

Residues 24–90 (WDNETVCKWL…FEYQILKNCY (67 aa)) form the SAM domain. Positions 134-393 (YQYIETISKN…SKELLKSFWF (260 aa)) constitute a Protein kinase domain. ATP is bound by residues 140–148 (ISKNKFCEI) and lysine 165.

It belongs to the protein kinase superfamily. Ser/Thr protein kinase family.

The sequence is that of Probable inactive serine/threonine-protein kinase samkD (samkD) from Dictyostelium discoideum (Social amoeba).